A 197-amino-acid polypeptide reads, in one-letter code: Dephospho-CoA kinase (197 aa).

In terms of domain architecture, DPCK spans 3–197 (IIGLTGGIAS…IEEIWAKRFP (195 aa)). 11 to 16 (ASGKST) contributes to the ATP binding site.

The protein belongs to the CoaE family.

It localises to the cytoplasm. It carries out the reaction 3'-dephospho-CoA + ATP = ADP + CoA + H(+). Its pathway is cofactor biosynthesis; coenzyme A biosynthesis; CoA from (R)-pantothenate: step 5/5. Its function is as follows. Catalyzes the phosphorylation of the 3'-hydroxyl group of dephosphocoenzyme A to form coenzyme A. This Geobacter sulfurreducens (strain ATCC 51573 / DSM 12127 / PCA) protein is Dephospho-CoA kinase.